The sequence spans 148 residues: Transcriptional regulator MraZ (148 aa).

2 consecutive SpoVT-AbrB domains span residues 5 to 53 and 82 to 125; these read ETAI…AEKE and SAVL…SEQA.

The protein belongs to the MraZ family. As to quaternary structure, forms oligomers.

Its subcellular location is the cytoplasm. It is found in the nucleoid. In Xanthomonas oryzae pv. oryzae (strain MAFF 311018), this protein is Transcriptional regulator MraZ.